Reading from the N-terminus, the 255-residue chain is Leucyl/phenylalanyl-tRNA--protein transferase (255 aa).

It belongs to the L/F-transferase family.

The protein localises to the cytoplasm. The enzyme catalyses N-terminal L-lysyl-[protein] + L-leucyl-tRNA(Leu) = N-terminal L-leucyl-L-lysyl-[protein] + tRNA(Leu) + H(+). The catalysed reaction is N-terminal L-arginyl-[protein] + L-leucyl-tRNA(Leu) = N-terminal L-leucyl-L-arginyl-[protein] + tRNA(Leu) + H(+). It catalyses the reaction L-phenylalanyl-tRNA(Phe) + an N-terminal L-alpha-aminoacyl-[protein] = an N-terminal L-phenylalanyl-L-alpha-aminoacyl-[protein] + tRNA(Phe). Its function is as follows. Functions in the N-end rule pathway of protein degradation where it conjugates Leu, Phe and, less efficiently, Met from aminoacyl-tRNAs to the N-termini of proteins containing an N-terminal arginine or lysine. This is Leucyl/phenylalanyl-tRNA--protein transferase from Burkholderia pseudomallei (strain 1106a).